The primary structure comprises 301 residues: MNQIEKTGELSASRFTVRDFTELVKIGIVNSNTITAFTGMWLAFQLNGISFIQNVDVIFFTIVGSALIVAASGAFNNVIDRDIDGIMERTKNRPTMTGKISGKRALMVALVLGVVGTIMLFMTTWQAGVLGVIGVFLYVVVYSLYAKRKLVSNTVIGSFSGAVPPLIGWFAVEPSFSIVPIMLFLVMFCWQPPHFYAIAIKRKEEYAAAGIPMLPVVKGIERTKKSMFFWVILLTILPFFMFELGIVYVVLATLLNIGWLALSIYGFKMEDSIKWAKWMFVYSLNYMTILFVAMVVISIFL.

9 helical membrane-spanning segments follow: residues 20-42, 55-75, 105-125, 126-146, 150-172, 176-198, 227-247, 249-269, and 280-300; these read FTEL…GMWL, VDVI…SGAF, ALMV…MTTW, QAGV…SLYA, LVSN…WFAV, FSIV…FYAI, MFFW…LGIV, VVLA…GFKM, and FVYS…ISIF.

It belongs to the UbiA prenyltransferase family. Protoheme IX farnesyltransferase subfamily. In terms of assembly, interacts with CtaA.

It localises to the cell membrane. It catalyses the reaction heme b + (2E,6E)-farnesyl diphosphate + H2O = Fe(II)-heme o + diphosphate. It functions in the pathway porphyrin-containing compound metabolism; heme O biosynthesis; heme O from protoheme: step 1/1. Functionally, converts heme B (protoheme IX) to heme O by substitution of the vinyl group on carbon 2 of heme B porphyrin ring with a hydroxyethyl farnesyl side group. The polypeptide is Protoheme IX farnesyltransferase (Listeria monocytogenes serotype 4b (strain CLIP80459)).